A 305-amino-acid polypeptide reads, in one-letter code: Nuclear egress protein 1 (305 aa).

The interval 1–42 (MYDIAPRRSGSRPGPGRDKTRRRSRFSAAGNPGVERRASRKS) is disordered. The CCCH-type zinc-finger motif lies at 105–224 (CLTLSGMGYY…YVIFPGTSAH (120 aa)).

The protein belongs to the herpesviridae NEC1 protein family. Forms a heterohexameric complex with NEC2. Interacts with capsid vertex specific component 2/CVC2; this interaction directs the capsid to the host inner nuclear membrane to initiate budding. Post-translationally, phosphorylated at serine residues in the N-terminus. This phosphorylation regulates the localization within the inner nuclear membrane.

It is found in the host nucleus inner membrane. Its function is as follows. Plays an essential role in virion nuclear egress, the first step of virion release from infected cell. Within the host nucleus, NEC1 interacts with the newly formed capsid through the vertexes and directs it to the inner nuclear membrane by associating with NEC2. Induces the budding of the capsid at the inner nuclear membrane as well as its envelopment into the perinuclear space. There, the NEC1/NEC2 complex promotes the fusion of the enveloped capsid with the outer nuclear membrane and the subsequent release of the viral capsid into the cytoplasm where it will reach the secondary budding sites in the host Golgi or trans-Golgi network. This chain is Nuclear egress protein 1, found in Human herpesvirus 2 (strain HG52) (HHV-2).